Consider the following 672-residue polypeptide: Serine/threonine-protein kinase ppk16 (672 aa).

A Protein kinase domain is found at 31-279 (YRIESVVGEG…IDQIISHPYF (249 aa)). ATP contacts are provided by residues 37–45 (VGEGSFGKV) and Lys-60. Asp-148 functions as the Proton acceptor in the catalytic mechanism. A Phosphoserine modification is found at Ser-231. Over residues 375-384 (VSVMSNNQDS) the composition is skewed to polar residues. Disordered stretches follow at residues 375 to 396 (VSVM…DSSN), 416 to 436 (DTLS…ENYL), 464 to 572 (NSFG…YSNV), and 632 to 672 (SGRK…TDLL). Positions 472 to 487 (NLPQTTHVDTGEQNTP) are enriched in polar residues. Residues 508 to 523 (SNSQNSPSKSSNLSIN) are compositionally biased toward low complexity. A compositionally biased stretch (polar residues) spans 531 to 541 (LQNTVISPQPT). 2 stretches are compositionally biased toward low complexity: residues 549–572 (RSLS…YSNV) and 639–649 (SSSSLMFNQSS).

This sequence belongs to the protein kinase superfamily. Ser/Thr protein kinase family.

The protein localises to the cytoplasm. The enzyme catalyses L-seryl-[protein] + ATP = O-phospho-L-seryl-[protein] + ADP + H(+). It carries out the reaction L-threonyl-[protein] + ATP = O-phospho-L-threonyl-[protein] + ADP + H(+). In terms of biological role, has a role in meiosis. This chain is Serine/threonine-protein kinase ppk16 (ppk16), found in Schizosaccharomyces pombe (strain 972 / ATCC 24843) (Fission yeast).